Consider the following 56-residue polypeptide: Ovomucoid (56 aa).

Residues 6–56 (VDCSEYPKPACTLEYRPLCGSDSKTYANKCNFCNAVVESNGTLTLSHFGKC) form the Kazal-like domain. 3 cysteine pairs are disulfide-bonded: cysteine 8–cysteine 38, cysteine 16–cysteine 35, and cysteine 24–cysteine 56. N-linked (GlcNAc...) asparagine glycosylation is present at asparagine 45.

Its subcellular location is the secreted. The sequence is that of Ovomucoid from Oreortyx pictus (Mountain quail).